The primary structure comprises 475 residues: B-type cell cycle switch protein ccs52A (475 aa).

Residues 1–29 form a disordered region; that stretch reads MDGTGNRNPPPTSTVGDNSPPPEPSPESL. A PEST motif motif is present at residues 7-28; the sequence is RNPPPTSTVGDNSPPPEPSPES. A phosphoserine mark is found at serine 43 and serine 45. A C-box motif is present at residues 51-57; that stretch reads DRFIPSR. The CSM motif signature appears at 80 to 91; the sequence is AYTTLLRTALFG. The residue at position 99 (threonine 99) is a Phosphothreonine. Phosphoserine occurs at positions 144 and 155. WD repeat units lie at residues 166-203, 207-246, 249-289, 290-329, 332-374, 376-417, and 420-459; these read QDDF…VTKL, GVDD…KIRS, GHRL…SKLS, GHKS…PVLK, EHTA…HLSC, DTGS…KLAT, and GHTY…KSQN. Serine 454 carries the phosphoserine modification.

This sequence belongs to the WD repeat CDC20/Fizzy family. Mostly expressed in nodules, and, to a lower extent, in root tips, stems, hypocotyls, leaves, flower buds and flowers.

Its subcellular location is the nucleus. The protein operates within protein modification; protein ubiquitination. In terms of biological role, component of the anaphase promoting complex/cyclosome (APC/C), a cell cycle-regulated E3 ubiquitin-protein ligase complex that controls progression through mitosis and the G1 phase of the cell cycle. Required to switch form cell proliferation to cell differentiation, endoreduplication and ploidy-dependent cell enlargement, including during nodulation, before nodule differentiation. Involved in root-knot nematode Meloidogyne incognita giant cells formation. This Medicago truncatula (Barrel medic) protein is B-type cell cycle switch protein ccs52A.